Consider the following 838-residue polypeptide: E3 ubiquitin-protein ligase RNF19A (838 aa).

Residues 128–351 (DFIECPLCLL…LSPSGCTFWG (224 aa)) are TRIAD supradomain. Positions 132, 135, 150, 152, 155, 158, 176, 179, 219, 224, 241, 246, 251, 254, 259, 264, 301, and 304 each coordinate Zn(2+). An RING-type 1 zinc finger spans residues 132–179 (CPLCLLRHSKDRFPEIMTCHHRSCVDCLRQYLRIEISESRVNISCPEC). The IBR-type zinc finger occupies 199-264 (EKYEEFMLRR…KQIWHPNQTC (66 aa)). The RING-type 2; atypical zinc finger occupies 301–332 (CPRCAAYIIKMNDGSCNHMTCAVCGCEFCWLC). The active site involves cysteine 316. Residues cysteine 321, cysteine 324, cysteine 329, cysteine 332, histidine 340, and cysteine 347 each coordinate Zn(2+). A run of 2 helical transmembrane segments spans residues 368-388 (LVGAPVGIALIAGIAIPAMII) and 424-444 (VIVSPVVAAVTVGIGVPIMLA). Disordered stretches follow at residues 622-685 (SKPS…SNMK) and 700-721 (QQSTNSSEFEAPSLSDSMPSVA). Serine 631 bears the Phosphoserine mark. Over residues 631 to 644 (SGSSSVDDGSAARS) the composition is skewed to low complexity. Residues 660 to 838 (ATKWSKEATA…ELKVAIQTDI (179 aa)) form an interaction with CASR region. Positions 671–683 (KKSKSGKLRKKSN) are enriched in basic residues. Residues 700-717 (QQSTNSSEFEAPSLSDSM) are compositionally biased toward polar residues.

This sequence belongs to the RBR family. RNF19 subfamily. Interacts with UBE2L3 and UBE2L6. Also interacts with transcription factor Sp1. Interacts with SNCAIP, CASR and VCP.

The protein resides in the membrane. It localises to the cytoplasm. The protein localises to the cytoskeleton. It is found in the microtubule organizing center. Its subcellular location is the centrosome. The enzyme catalyses [E2 ubiquitin-conjugating enzyme]-S-ubiquitinyl-L-cysteine + [acceptor protein]-L-lysine = [E2 ubiquitin-conjugating enzyme]-L-cysteine + [acceptor protein]-N(6)-ubiquitinyl-L-lysine.. Its pathway is protein modification; protein ubiquitination. Its function is as follows. E3 ubiquitin-protein ligase which accepts ubiquitin from E2 ubiquitin-conjugating enzymes UBE2L3 and UBE2L6 in the form of a thioester and then directly transfers the ubiquitin to targeted substrates, such as SNCAIP or CASR. The polypeptide is E3 ubiquitin-protein ligase RNF19A (RNF19A) (Sus scrofa (Pig)).